The primary structure comprises 93 residues: Small ribosomal subunit protein uS19 (93 aa).

The protein belongs to the universal ribosomal protein uS19 family.

Functionally, protein S19 forms a complex with S13 that binds strongly to the 16S ribosomal RNA. This is Small ribosomal subunit protein uS19 from Mycolicibacterium paratuberculosis (strain ATCC BAA-968 / K-10) (Mycobacterium paratuberculosis).